Consider the following 101-residue polypeptide: Small ribosomal subunit protein uS14 (101 aa).

Belongs to the universal ribosomal protein uS14 family. As to quaternary structure, part of the 30S ribosomal subunit. Contacts proteins S3 and S10.

Its function is as follows. Binds 16S rRNA, required for the assembly of 30S particles and may also be responsible for determining the conformation of the 16S rRNA at the A site. This is Small ribosomal subunit protein uS14 from Methylococcus capsulatus (strain ATCC 33009 / NCIMB 11132 / Bath).